Reading from the N-terminus, the 347-residue chain is Quinolinate synthase (347 aa).

Iminosuccinate is bound by residues His47 and Ser68. Residue Cys113 coordinates [4Fe-4S] cluster. Iminosuccinate contacts are provided by residues 139 to 141 (YAN) and Ser156. Cys200 is a [4Fe-4S] cluster binding site. Residues 226–228 (HPE) and Thr243 contribute to the iminosuccinate site. Residue Cys297 participates in [4Fe-4S] cluster binding.

It belongs to the quinolinate synthase family. Type 1 subfamily. The cofactor is [4Fe-4S] cluster.

It localises to the cytoplasm. It carries out the reaction iminosuccinate + dihydroxyacetone phosphate = quinolinate + phosphate + 2 H2O + H(+). It functions in the pathway cofactor biosynthesis; NAD(+) biosynthesis; quinolinate from iminoaspartate: step 1/1. In terms of biological role, catalyzes the condensation of iminoaspartate with dihydroxyacetone phosphate to form quinolinate. This is Quinolinate synthase from Escherichia coli O139:H28 (strain E24377A / ETEC).